We begin with the raw amino-acid sequence, 564 residues long: Potassium-transporting ATPase potassium-binding subunit (564 aa).

A run of 10 helical transmembrane segments spans residues 7–27, 67–87, 135–155, 179–199, 258–278, 286–306, 382–402, 420–440, 487–507, and 528–548; these read LLIL…GRFF, AWAL…MLML, VGLT…LVAL, LYAL…QGVP, FELV…GHYV, AILG…LWAE, VGLN…GLMI, LLVA…AIAA, LMLS…VLAL, and GLLF…LTFL.

The protein belongs to the KdpA family. In terms of assembly, the system is composed of three essential subunits: KdpA, KdpB and KdpC.

It localises to the cell inner membrane. Part of the high-affinity ATP-driven potassium transport (or Kdp) system, which catalyzes the hydrolysis of ATP coupled with the electrogenic transport of potassium into the cytoplasm. This subunit binds the periplasmic potassium ions and delivers the ions to the membrane domain of KdpB through an intramembrane tunnel. The polypeptide is Potassium-transporting ATPase potassium-binding subunit (Pseudomonas syringae pv. tomato (strain ATCC BAA-871 / DC3000)).